Consider the following 697-residue polypeptide: PHD finger protein At2g01810 (697 aa).

Disordered stretches follow at residues 319 to 362 and 457 to 478; these read DENS…QYYS and EQKR…TSTT. Positions 339-349 are enriched in basic and acidic residues; it reads SGRDTVLDDHN. A PHD-type zinc finger spans residues 635 to 685; it reads TVDCKCGARDDDGERMVACDACKVWHHTLCNSIEDDEAVPSVFLCNMCYGD.

The protein resides in the nucleus. The polypeptide is PHD finger protein At2g01810 (Arabidopsis thaliana (Mouse-ear cress)).